The primary structure comprises 134 residues: Cytochrome b5 isoform B (134 aa).

The Cytochrome b5 heme-binding domain occupies 5-81 (AKIFTLSEVS…MEQYYVGEID (77 aa)). Heme-binding residues include histidine 40 and histidine 64. A helical membrane pass occupies residues 107–127 (FIIKLLQFLVPLAILGLAVGI).

The protein belongs to the cytochrome b5 family. As to quaternary structure, interacts with CER1, FAH1, FAH2 and BI-1.

The protein localises to the endoplasmic reticulum membrane. In terms of biological role, membrane bound hemoprotein which function as an electron carrier for several membrane bound oxygenases, including fatty acid desaturases. The chain is Cytochrome b5 isoform B from Arabidopsis thaliana (Mouse-ear cress).